We begin with the raw amino-acid sequence, 180 residues long: Bifunctional protein PyrR (180 aa).

Residues 39 to 40 (TR), 103 to 111 (DDVLYTGRT), and Arg-136 each bind substrate. Positions 99-111 (VILIDDVLYTGRT) match the PRPP-binding motif.

Belongs to the purine/pyrimidine phosphoribosyltransferase family. PyrR subfamily. In terms of assembly, homodimer and homohexamer; in equilibrium.

It carries out the reaction UMP + diphosphate = 5-phospho-alpha-D-ribose 1-diphosphate + uracil. In terms of biological role, regulates transcriptional attenuation of the pyrimidine nucleotide (pyr) operon by binding in a uridine-dependent manner to specific sites on pyr mRNA. This disrupts an antiterminator hairpin in the RNA and favors formation of a downstream transcription terminator, leading to a reduced expression of downstream genes. Functionally, also displays a weak uracil phosphoribosyltransferase activity which is not physiologically significant. The sequence is that of Bifunctional protein PyrR from Halalkalibacterium halodurans (strain ATCC BAA-125 / DSM 18197 / FERM 7344 / JCM 9153 / C-125) (Bacillus halodurans).